Consider the following 856-residue polypeptide: MSVDKSKALVLWLDEVTIEDIPIAGGKNASLGEMIRNLSPLGVKIPYGYVVTANAYYYFLDYNNLRDKIRKILEGLNTDDLKDLQRRGHEVRELIRGGTFPPDLEEAIKDYYNKLSEKYKTHAVDVAVRSSATAEDLPDASFAGQQETYLNVVGAENVLVAIKNCFASLFTDRAIVYRERFGFDHFKVGIAVGVQKMVRSDMGASGVMFTLDTETGFKDVVVINAAYGLGELLVRGEVTPDEYIVFKPTLMKGYSAIIEKKLGRKDRKMIYGTGDERVKIVNVPKEDQKKFALNDDEILQLAKWGVLIEEHYSKKNGRWTPMDIEWAKDGILNELFVVQARPETVHSRKKENVVKIYKIKTPEEERKNRVIVKGIAVGDKIATGKARVLFDLKEADQFQEGEILVTDITDPDWEPVMKKAAAIVTNRGGRTSHAAIVARELGIPAVVGTGNATEKIKTGEEITVSCAEGETGYVYEGKIDYEVEEINLENIPKPKTKIMMNIGNPESAFRYASLPNDGVGLAREEFIIANYIKIHPLALLHYEDLKELYEKLERENLIDEKGFVQFKLIYHYANGRLANKLAKGKDKLRVNLRKILQDIENLTFGYEDKATYYIKKLSYGIAKIAAAFYPNPVIVRFSDFKSNEYANLIGGILFEPEEENPMLGWRGASRYYSDVFKEAFGMECKAIIRVRNKMGLTNTKVMIPFCRTPEEGEKVLQVMEEYGLRKGENGLEVYVMAELPSNIVLADRYAQIFDGFSIGSNDLTQLTLGLDRDSELVAHLYDERNEAVKRLIAQLIKTAKEYGRKVGICGQAPSDFPEFAQFLVEQGIDSISLNPDSVLKTMLAVVEMEKKLGVLK.

His433 serves as the catalytic Tele-phosphohistidine intermediate. 7 residues coordinate substrate: Arg523, Arg636, Glu738, Gly759, Ser760, Asn761, and Asp762. Glu738 serves as a coordination point for Mg(2+). Asp762 contacts Mg(2+). Catalysis depends on Cys809, which acts as the Proton donor.

Belongs to the PEP-utilizing enzyme family. Requires Mg(2+) as cofactor.

The catalysed reaction is pyruvate + ATP + H2O = phosphoenolpyruvate + AMP + phosphate + 2 H(+). The protein operates within carbohydrate biosynthesis; gluconeogenesis. Its function is as follows. Catalyzes the phosphorylation of pyruvate to phosphoenolpyruvate. The protein is Phosphoenolpyruvate synthase (ppsA) of Aquifex aeolicus (strain VF5).